The chain runs to 302 residues: Methionyl-tRNA formyltransferase (302 aa).

108–111 (SILP) provides a ligand contact to (6S)-5,6,7,8-tetrahydrofolate.

This sequence belongs to the Fmt family.

It carries out the reaction L-methionyl-tRNA(fMet) + (6R)-10-formyltetrahydrofolate = N-formyl-L-methionyl-tRNA(fMet) + (6S)-5,6,7,8-tetrahydrofolate + H(+). In terms of biological role, attaches a formyl group to the free amino group of methionyl-tRNA(fMet). The formyl group appears to play a dual role in the initiator identity of N-formylmethionyl-tRNA by promoting its recognition by IF2 and preventing the misappropriation of this tRNA by the elongation apparatus. This Sulfurimonas denitrificans (strain ATCC 33889 / DSM 1251) (Thiomicrospira denitrificans (strain ATCC 33889 / DSM 1251)) protein is Methionyl-tRNA formyltransferase.